The following is a 1374-amino-acid chain: DNA-directed RNA polymerase subunit beta' (1374 aa).

Residues 1 to 47 form a disordered region; sequence MTSTSPKSRKPSTKTTKSKSKSKSKSKAAKAAAASASPALARTPPQF. The span at 7-28 shows a compositional bias: basic residues; the sequence is KSRKPSTKTTKSKSKSKSKSKA. Low complexity predominate over residues 29–45; the sequence is AKAAAASASPALARTPP. Residues cysteine 258, cysteine 325, cysteine 332, and cysteine 335 each contribute to the Zn(2+) site. A disordered region spans residues 1343 to 1374; it reads VRPTGENELEEEQLPDPSALEGLQQEGLLTEE. Residues 1362–1374 show a composition bias toward low complexity; it reads LEGLQQEGLLTEE.

Belongs to the RNA polymerase beta' chain family. RpoC2 subfamily. In cyanobacteria the RNAP catalytic core is composed of 2 alpha, 1 beta, 1 beta', 1 gamma and 1 omega subunit. When a sigma factor is associated with the core the holoenzyme is formed, which can initiate transcription. The cofactor is Zn(2+).

The catalysed reaction is RNA(n) + a ribonucleoside 5'-triphosphate = RNA(n+1) + diphosphate. Functionally, DNA-dependent RNA polymerase catalyzes the transcription of DNA into RNA using the four ribonucleoside triphosphates as substrates. The polypeptide is DNA-directed RNA polymerase subunit beta' (Prochlorococcus marinus (strain MIT 9303)).